A 384-amino-acid chain; its full sequence is Spermatogenesis-associated protein 32 (384 aa).

The segment at 23–60 (RDDLSQHQIQEEQELEADMLEQKPQLQVDLDLDPDPDP) is disordered. 2 positions are modified to phosphoserine: S167 and S170. Disordered regions lie at residues 211–232 (DAHS…SSDL), 284–310 (VEER…LKSW), and 340–366 (LLQP…EKEN). Residues 214 to 231 (SAPPTTSSQAPSPLLSSD) show a composition bias toward low complexity. The segment covering 353–366 (SKEDSVPPGKEKEN) has biased composition (basic and acidic residues).

Interacts with syntaxin-1 and ACTB. In terms of tissue distribution, detected in testis, and on the acrosomal cap of spermatids.

This is Spermatogenesis-associated protein 32 (SPATA32) from Homo sapiens (Human).